The sequence spans 139 residues: MIKGINHITYSVSNIAKSIEFYRDILGADILVESETSAYFNLGGIWLALNEEKNIPRSEIKYSYTHIAFTISDNDFEDWYNWLKENEVNILEGRDRDIRDKKSIYFTDLDGHKLELHTGSLEDRLSYYKEAKPHMNFYI.

The 116-residue stretch at 4–119 (GINHITYSVS…DGHKLELHTG (116 aa)) folds into the VOC domain. Histidine 7, histidine 66, and glutamate 115 together coordinate Mg(2+). Residue glutamate 115 is the Proton donor/acceptor of the active site.

Belongs to the fosfomycin resistance protein family. FosB subfamily. Homodimer. Mg(2+) serves as cofactor.

It localises to the cytoplasm. Functionally, metallothiol transferase which confers resistance to fosfomycin by catalyzing the addition of a thiol cofactor to fosfomycin. L-cysteine is probably the physiological thiol donor. This is Metallothiol transferase FosB from Staphylococcus haemolyticus.